Consider the following 831-residue polypeptide: V-type proton ATPase subunit a (831 aa).

At 1 to 418 the chain is on the cytoplasmic side; the sequence is MSPSLFRSEE…DSYGIATYRE (418 aa). Residues 419-437 traverse the membrane as a helical segment; the sequence is VNHGIVAIVTFPFLFAIMF. Topologically, residues 438–439 are vacuolar; it reads GD. The chain crosses the membrane as a helical span at residues 440–456; that stretch reads LGHGAIMASVALMFVLY. At 457-471 the chain is on the cytoplasmic side; it reads EKTLGAKKDLDEIVG. A helical membrane pass occupies residues 472–501; sequence MVFYGRYIVLLMGLFSMYVGFVYNDLFSKP. At 502 to 548 the chain is on the vacuolar side; the sequence is MSIFSSRWVWPVKSEEAIARAVQVGTYPIGIDPTWHSADNNLLFMNS. The chain crosses the membrane as a helical span at residues 549-568; sequence YKMKLSIILGVIHMTFCLFL. The Cytoplasmic segment spans residues 569-586; that stretch reads SLSNYRFFKRKLDIYAVF. A helical transmembrane segment spans residues 587–607; that stretch reads VPSLIFLEAIFGYLVITIVYK. The Vacuolar segment spans residues 608 to 650; that stretch reads WCIDWKAKDLQPPSLLNMLILMFLSPGTLEDQLYPGQKYLQVG. The helical transmembrane segment at 651–670 threads the bilayer; that stretch reads LVIAALICVPWLLIVKPFVL. Residues 671-723 lie on the Cytoplasmic side of the membrane; that stretch reads WRRHSNEENKYQSLNSDLPNVDEADALMAVDSQEKQAEPFELGEVVIHQVIHT. Residues 724–748 form a helical membrane-spanning segment; sequence IEFCLGCVSHTASYLRLWALSLAHN. Residues 749–769 lie on the Vacuolar side of the membrane; sequence QLSSVLWNMTLANGFRMTGIV. A helical transmembrane segment spans residues 770 to 808; sequence GSIFVVILFGFWFIATCVVLVAMEGTSAMLHSLRLHWVE. The Cytoplasmic portion of the chain corresponds to 809–831; it reads GMSKHFEGEGYAFTPFTFKVTAE.

It belongs to the V-ATPase 116 kDa subunit family. As to quaternary structure, V-ATPase is a heteromultimeric enzyme composed of a peripheral catalytic V1 complex (components A to H) attached to an integral membrane V0 proton pore complex (components: a, c, c', c'', d, e, f and VOA1).

It is found in the vacuole membrane. Functionally, subunit of the V0 complex of vacuolar(H+)-ATPase (V-ATPase), a multisubunit enzyme composed of a peripheral complex (V1) that hydrolyzes ATP and a membrane integral complex (V0) that translocates protons. V-ATPase is responsible for acidifying and maintaining the pH of intracellular compartments. The chain is V-type proton ATPase subunit a (vph1) from Schizosaccharomyces pombe (strain 972 / ATCC 24843) (Fission yeast).